A 421-amino-acid polypeptide reads, in one-letter code: Replication-associated recombination protein A (421 aa).

45-52 serves as a coordination point for ATP; it reads GPPGIGKT.

Belongs to the AAA ATPase family. RarA/MGS1/WRNIP1 subfamily. Homotetramer. Interacts with single-stranded binding protein SsbA. May interact with PriA.

Its subcellular location is the cytoplasm. The protein resides in the nucleoid. SsDNA-dependent ATP hydrolysis is stimulated by single-stranded binding protein SsbA but not by SsbB; in the presence of SsbB, ssDNA secondary structure is removed and RarA's ATPase activity is decreased. The C-terminal 9 residues of SsbA are sufficient to stimulate ATPase activity. Functionally, plays a role in recombination-dependent DNA replication. Positively affects the formation of RecA threads during response to DNA damage, directly or indirectly counteracting the negative RecA modulators RecX and RecU. Stabilizes a RecA-ssDNA complex. In vitro, in the presence of SsbA, inhibits PriA-dependent DNA replication restart of both leading and lagging strands; elongation is insensitive to RarA. Plays a role in response to DNA damage, localizes to the replication fork but also to DNA elsewhere in the cell. Probably required for repair of single-stranded nicks generated by H(2)O(2). Epistatic to RecA, partially represses deletions of the error-prone translesion DNA polymerases (dinB1 and dinB2), genetically interacts with replicative helicase loaders dnaB and dnaD. Epistatic to recF and recO mutations upon DNA damage. A DNA-dependent ATPase stimulated by hairpin structures in circular single-stranded (ss)DNA or ssDNA-dsDNA junctions, by blunt end and 5'-tailed dsDNA and by single-stranded binding protein SsbA protein bound to ssDNA. Preferentially binds ssDNA and replication-fork structures; SsbA stimulates binding to ssDNA. Addition of ATP to the protein has no visible effect in vitro. This Bacillus subtilis (strain 168) protein is Replication-associated recombination protein A.